The sequence spans 119 residues: Aspartate 1-decarboxylase (119 aa).

The Schiff-base intermediate with substrate; via pyruvic acid role is filled by Ser25. Ser25 carries the post-translational modification Pyruvic acid (Ser). Residue Thr57 participates in substrate binding. The Proton donor role is filled by Tyr58. Gly73–Ala75 contacts substrate.

The protein belongs to the PanD family. In terms of assembly, heterooctamer of four alpha and four beta subunits. Pyruvate serves as cofactor. Post-translationally, is synthesized initially as an inactive proenzyme, which is activated by self-cleavage at a specific serine bond to produce a beta-subunit with a hydroxyl group at its C-terminus and an alpha-subunit with a pyruvoyl group at its N-terminus.

It is found in the cytoplasm. It carries out the reaction L-aspartate + H(+) = beta-alanine + CO2. The protein operates within cofactor biosynthesis; (R)-pantothenate biosynthesis; beta-alanine from L-aspartate: step 1/1. Functionally, catalyzes the pyruvoyl-dependent decarboxylation of aspartate to produce beta-alanine. This is Aspartate 1-decarboxylase from Herminiimonas arsenicoxydans.